The sequence spans 271 residues: Tryptophan synthase alpha chain (271 aa).

Residues glutamate 49 and aspartate 60 each act as proton acceptor in the active site.

It belongs to the TrpA family. In terms of assembly, tetramer of two alpha and two beta chains.

The catalysed reaction is (1S,2R)-1-C-(indol-3-yl)glycerol 3-phosphate + L-serine = D-glyceraldehyde 3-phosphate + L-tryptophan + H2O. Its pathway is amino-acid biosynthesis; L-tryptophan biosynthesis; L-tryptophan from chorismate: step 5/5. Its function is as follows. The alpha subunit is responsible for the aldol cleavage of indoleglycerol phosphate to indole and glyceraldehyde 3-phosphate. The protein is Tryptophan synthase alpha chain of Burkholderia ambifaria (strain MC40-6).